The primary structure comprises 185 residues: uncharacterized protein (185 aa).

The next 2 helical transmembrane spans lie at 1 to 21 and 111 to 131; these read MMKF…LTPE and FLWI…AFAW.

This sequence to A.aeolicus aq_1900.

The protein localises to the cell membrane. This is an uncharacterized protein from Aquifex aeolicus (strain VF5).